The sequence spans 646 residues: EF-hand calcium-binding domain-containing protein 6 (646 aa).

EF-hand domains are found at residues 1 to 27 (FLET…FDIP), 28 to 63 (LTPR…NYSP), 109 to 144 (DCYQ…CGCS), 214 to 249 (SSQL…FCHK), 321 to 356 (SHYH…NVQI), and 357 to 392 (LTDE…ERAA). Threonine 29 carries the post-translational modification Phosphothreonine. Positions 390–452 (RAATPTATGD…TTAIPGTPPL (63 aa)) are disordered. Over residues 432-446 (KPQSHPCTAASTTAI) the composition is skewed to polar residues. Position 435 is a phosphoserine (serine 435). Threonine 439 and threonine 449 each carry phosphothreonine. The segment at 448–646 (GTPPLQNCDP…YNDFLRAFLQ (199 aa)) is interaction with PARK7. 4 consecutive EF-hand domains span residues 468–503 (GCWR…FNLD), 504–539 (ISKE…LLKA), 579–614 (HCWR…YSIN), and 615–646 (LSEE…AFLQ). The interaction with AR stretch occupies residues 552 to 646 (NAHKMKDSGA…YNDFLRAFLQ (95 aa)).

In terms of assembly, microtubule inner protein component of sperm flagellar doublet microtubules. Binds PARK7. Part of a ternary complex containing PARK7, EFCAB6/DJBP and AR.

The protein localises to the nucleus. The protein resides in the cytoplasm. It is found in the cytoskeleton. It localises to the flagellum axoneme. Its function is as follows. Negatively regulates the androgen receptor by recruiting histone deacetylase complex, and protein DJ-1 antagonizes this inhibition by abrogation of this complex. Microtubule inner protein (MIP) part of the dynein-decorated doublet microtubules (DMTs) in cilia axoneme, which is required for motile cilia beating. In Macaca fascicularis (Crab-eating macaque), this protein is EF-hand calcium-binding domain-containing protein 6 (EFCAB6).